Consider the following 121-residue polypeptide: Large ribosomal subunit protein uL14c (121 aa).

It belongs to the universal ribosomal protein uL14 family. In terms of assembly, part of the 50S ribosomal subunit.

The protein resides in the plastid. It localises to the chloroplast. In terms of biological role, binds to 23S rRNA. This Oedogonium cardiacum (Filamentous green alga) protein is Large ribosomal subunit protein uL14c.